The sequence spans 797 residues: MHTIRCLILSALSVAGAAQAQGSQDAAPAGRQPVGSVASPGLEMPGLRLSPGLRVRKLTEDQMPAFMEADDMSGEPSAELLLKGNAQVRRVDGVIKGDSIHYDDATSEVEVKGNARILRDATLVTGPSARINLNTYSGDIDKPNFWIGASGGTARAEHADIFSRSQMRLTDVYYSGCPCEKPSWYIKATSLDLDVDENEGVARNGVLYFKDVPILASPYLTFPIRKERKSGFLLPTYGTSSKTGLDISVPYYFNLAPNYDATLISRYMGKRGLQLGGDFRYLGYSYAGSVSGTYLPNDRDAGFDRYMYRLTHKQYLGSGFYTDWDISGVSDDNYYRDMTTLGLNTASTTYLPRQGRVGWSSNYWQTYVQVYKYRTLQDPDAPIVPPYDKEPEIFLQGARYDWNGFDVRMDSTAVRFRRPLFLGNRIGQEGERLEAYPTIAYPIVRAGWYFTPKAGLNYTQYHTSWFNQDWNRLGSLAPYRGTESRTLPIVSLDTGMTFERPTTLFGKDSTQTLEPRLYYLRVPYRNQSALPVYDTSLADFSFEQAFQENIYTGGWDRIANANQLTVGLTTRWLDASTGFQRVALSAAQRLYFEDQRVTLPGETPRENVRSDFLVGASAALTDTLTTDLAAQYNPYDNNWSRGLVSARWTPQRQTTLALAYRYQRDPISNISYAPRGQNQVTLAFQWPFTQRWYGVGRVDYAIRSDTGGVVGASDSARVTQAIAGLEYKGDCCWTGRVVFQRYAVAANDANTAVFFQLELTGLGALGTDPLKLLDKSIPGYQPVSQPTPAGTTFERYE.

Residues 1-20 (MHTIRCLILSALSVAGAAQA) form the signal peptide. The disordered stretch occupies residues 23–45 (SQDAAPAGRQPVGSVASPGLEMP).

It belongs to the LptD family. Component of the lipopolysaccharide transport and assembly complex. Interacts with LptE and LptA.

Its subcellular location is the cell outer membrane. Functionally, together with LptE, is involved in the assembly of lipopolysaccharide (LPS) at the surface of the outer membrane. The polypeptide is LPS-assembly protein LptD (Bordetella avium (strain 197N)).